Consider the following 352-residue polypeptide: Protein RecA (352 aa).

67-74 (GPESSGKT) provides a ligand contact to ATP. The tract at residues 330-352 (STPKPEAESQEKAAAAQDDDSLV) is disordered.

It belongs to the RecA family.

The protein resides in the cytoplasm. Its function is as follows. Can catalyze the hydrolysis of ATP in the presence of single-stranded DNA, the ATP-dependent uptake of single-stranded DNA by duplex DNA, and the ATP-dependent hybridization of homologous single-stranded DNAs. It interacts with LexA causing its activation and leading to its autocatalytic cleavage. In Chromohalobacter salexigens (strain ATCC BAA-138 / DSM 3043 / CIP 106854 / NCIMB 13768 / 1H11), this protein is Protein RecA.